The chain runs to 262 residues: Bacteriorhodopsin (262 aa).

A propeptide spanning residues 1–13 is cleaved from the precursor; it reads MLELLPTAVEGVS. Pyrrolidone carboxylic acid is present on glutamine 14. Residues 14–22 are Extracellular-facing; sequence QAQITGRPE. The helical transmembrane segment at 23–42 threads the bilayer; the sequence is WIWLALGTALMGLGTLYFLV. Residues 43–56 are Cytoplasmic-facing; the sequence is KGMGVSDPDAKKFY. Residues 57–75 form a helical membrane-spanning segment; that stretch reads AITTLVPAIAFTMYLSMLL. Over 76–92 the chain is Extracellular; sequence GYGLTMVPFGGEQNPIY. A helical membrane pass occupies residues 93 to 109; that stretch reads WARYADWLFTTPLLLLD. At 110 to 120 the chain is on the cytoplasmic side; that stretch reads LALLVDADQGT. The chain crosses the membrane as a helical span at residues 121 to 140; it reads ILALVGADGIMIGTGLVGAL. The Extracellular segment spans residues 141–147; it reads TKVYSYR. The chain crosses the membrane as a helical span at residues 148 to 167; sequence FVWWAISTAAMLYILYVLFF. Residues 168 to 185 are Cytoplasmic-facing; it reads GFTSKAESMRPEVASTFK. Residues 186–204 traverse the membrane as a helical segment; sequence VLRNVTVVLWSAYPVVWLI. The Extracellular portion of the chain corresponds to 205–216; sequence GSEGAGIVPLNI. The chain crosses the membrane as a helical span at residues 217–236; sequence ETLLFMVLDVSAKVGFGLIL. Lysine 229 is subject to N6-(retinylidene)lysine. Topologically, residues 237–262 are cytoplasmic; the sequence is LRSRAIFGEAEAPEPSAGDGAAATSD.

Homotrimer. The covalent binding of retinal to the apoprotein, bacterioopsin, generates bacteriorhodopsin.

The protein localises to the cell membrane. Its function is as follows. Light-driven proton pump. The protein is Bacteriorhodopsin (bop) of Halobacterium salinarum (strain ATCC 700922 / JCM 11081 / NRC-1) (Halobacterium halobium).